We begin with the raw amino-acid sequence, 363 residues long: Aspartate carbamoyltransferase, chloroplastic (363 aa).

Residues 1-21 (MAAARATLPLPRVPAPSPRPQ) form a disordered region. A chloroplast-targeting transit peptide spans 1 to 36 (MAAARATLPLPRVPAPSPRPQLRPFPSLPARRGAVA). The span at 11–21 (PRVPAPSPRPQ) shows a compositional bias: pro residues. Residues arginine 109 and threonine 110 each contribute to the carbamoyl phosphate site. UMP-binding residues include arginine 109 and threonine 110. Lysine 139 contributes to the L-aspartate binding site. Residues arginine 160, histidine 188, and glutamine 191 each coordinate carbamoyl phosphate. UMP-binding residues include arginine 160 and histidine 188. Arginine 221 and arginine 283 together coordinate UMP. L-aspartate is bound by residues arginine 221 and arginine 283. The carbamoyl phosphate site is built by leucine 323 and proline 324.

Belongs to the aspartate/ornithine carbamoyltransferase superfamily. ATCase family. In terms of assembly, homotrimer.

The protein resides in the plastid. It is found in the chloroplast. The enzyme catalyses carbamoyl phosphate + L-aspartate = N-carbamoyl-L-aspartate + phosphate + H(+). It functions in the pathway pyrimidine metabolism; UMP biosynthesis via de novo pathway; (S)-dihydroorotate from bicarbonate: step 2/3. With respect to regulation, feedback inhibited by UMP. Catalyzes the condensation of carbamoyl phosphate and aspartate to form carbamoyl aspartate and inorganic phosphate, the committed step in the de novo pyrimidine nucleotide biosynthesis pathway. The chain is Aspartate carbamoyltransferase, chloroplastic (PYRB) from Oryza sativa subsp. japonica (Rice).